We begin with the raw amino-acid sequence, 308 residues long: tRNA dimethylallyltransferase (308 aa).

16–23 (GPTASGKT) contributes to the ATP binding site. 18-23 (TASGKT) contacts substrate. Residues 41–44 (DSQQ) are interaction with substrate tRNA.

It belongs to the IPP transferase family. In terms of assembly, monomer. It depends on Mg(2+) as a cofactor.

It carries out the reaction adenosine(37) in tRNA + dimethylallyl diphosphate = N(6)-dimethylallyladenosine(37) in tRNA + diphosphate. Functionally, catalyzes the transfer of a dimethylallyl group onto the adenine at position 37 in tRNAs that read codons beginning with uridine, leading to the formation of N6-(dimethylallyl)adenosine (i(6)A). This chain is tRNA dimethylallyltransferase, found in Myxococcus xanthus (strain DK1622).